Reading from the N-terminus, the 393-residue chain is Protein TsgA (393 aa).

The next 12 membrane-spanning stretches (helical) occupy residues 11–31 (WISF…GMVM), 51–71 (FLNA…EIIP), 78–98 (FGFI…SLAL), 101–121 (AAMF…TFLI), 134–154 (LLFT…VAAF), 162–182 (WYWV…LTFG), 206–226 (IGVL…LGFI), 245–265 (ALVS…SFIL), 273–293 (ILTV…TGTQ), 298–318 (WFIL…ITLG), 332–352 (FILT…GPIV), and 361–381 (LLTA…LGFV).

This sequence belongs to the major facilitator superfamily. TsgA family.

The protein resides in the cell inner membrane. The chain is Protein TsgA from Salmonella agona (strain SL483).